Consider the following 456-residue polypeptide: tRNA modification GTPase MnmE (456 aa).

Positions 29, 87, and 126 each coordinate (6S)-5-formyl-5,6,7,8-tetrahydrofolate. Residues 222 to 380 enclose the TrmE-type G domain; it reads GYKLAIIGRP…LLSLLASWLD (159 aa). Asn232 is a binding site for K(+). GTP is bound by residues 232 to 237, 251 to 257, and 276 to 279; these read NVGKSS, SDIPGTT, and DTAG. Ser236 lines the Mg(2+) pocket. Residues Ser251, Ile253, and Thr256 each coordinate K(+). Thr257 is a binding site for Mg(2+). Lys456 is a binding site for (6S)-5-formyl-5,6,7,8-tetrahydrofolate.

This sequence belongs to the TRAFAC class TrmE-Era-EngA-EngB-Septin-like GTPase superfamily. TrmE GTPase family. As to quaternary structure, homodimer. Heterotetramer of two MnmE and two MnmG subunits. Requires K(+) as cofactor.

It localises to the cytoplasm. In terms of biological role, exhibits a very high intrinsic GTPase hydrolysis rate. Involved in the addition of a carboxymethylaminomethyl (cmnm) group at the wobble position (U34) of certain tRNAs, forming tRNA-cmnm(5)s(2)U34. In Wolinella succinogenes (strain ATCC 29543 / DSM 1740 / CCUG 13145 / JCM 31913 / LMG 7466 / NCTC 11488 / FDC 602W) (Vibrio succinogenes), this protein is tRNA modification GTPase MnmE.